Reading from the N-terminus, the 510-residue chain is JmjC domain-containing histone demethylation protein 1 (510 aa).

Residues 2 to 53 form a PHD-type zinc finger; sequence PNRCDFCTSSSTKDKQQWTQCDGCDRWVHDVCVSITDPVSYAKYHCPTCTKT. The JmjC domain maps to 216-365; the sequence is TLVRELDLVD…TQIDIAGIEV (150 aa). Residue Thr-255 participates in substrate binding. Positions 258 and 260 each coordinate Fe cation. Lys-275 serves as a coordination point for substrate. His-333 lines the Fe cation pocket. A disordered region spans residues 475–510; the sequence is KGESKEKHKIESQLPEEKILQGSKLESKEEVQTENF. Over residues 477–510 the composition is skewed to basic and acidic residues; that stretch reads ESKEKHKIESQLPEEKILQGSKLESKEEVQTENF.

Belongs to the JHDM1 histone demethylase family. Fe(2+) is required as a cofactor.

The protein resides in the nucleus. It carries out the reaction N(6),N(6)-dimethyl-L-lysyl(36)-[histone H3] + 2 2-oxoglutarate + 2 O2 = L-lysyl(36)-[histone H3] + 2 formaldehyde + 2 succinate + 2 CO2. Histone demethylase that specifically demethylates 'Lys-36' of histone H3, thereby playing a central role in histone code. This Yarrowia lipolytica (strain CLIB 122 / E 150) (Yeast) protein is JmjC domain-containing histone demethylation protein 1 (JHD1).